A 765-amino-acid chain; its full sequence is Protein BCH2 (765 aa).

Positions 1–31 (MSFLWGSTKSKKGKNKKAAGSLPSGVVPQQR) are disordered. The interval 735–765 (LECLSKNRNEACLAYERPLPDLPSTIKPLAD) is CHS5-binding.

Belongs to the CHAPS family. Component of the CHS5/6 complex composed of the 4 CHAPS proteins BCH1, BCH2, BUD7, and CHS6 as well as at least CHS5 and GTP-bound ARF1. The complex interacts with the cargo protein CHS3.

Its subcellular location is the golgi apparatus. It localises to the trans-Golgi network membrane. Its function is as follows. Member of the CHS5-ARF1P-binding proteins (CHAPS) which mediates export of specific cargo proteins, including chitin synthase CHS3. This is Protein BCH2 (BCH2) from Saccharomyces cerevisiae (strain ATCC 204508 / S288c) (Baker's yeast).